We begin with the raw amino-acid sequence, 305 residues long: Syntaxin-112 (305 aa).

An N-acetylmethionine modification is found at M1. Residues Q52–N119 adopt a coiled-coil conformation. The region spanning D210 to A272 is the t-SNARE coiled-coil homology domain.

The protein belongs to the syntaxin family. In terms of assembly, part of the t-SNARE complex.

Its function is as follows. Vesicle trafficking protein that functions in the secretory pathway. This Arabidopsis thaliana (Mouse-ear cress) protein is Syntaxin-112 (SYP112).